The following is a 131-amino-acid chain: Small ribosomal subunit protein uS9 (131 aa).

It belongs to the universal ribosomal protein uS9 family.

This chain is Small ribosomal subunit protein uS9, found in Actinobacillus succinogenes (strain ATCC 55618 / DSM 22257 / CCUG 43843 / 130Z).